A 598-amino-acid chain; its full sequence is Ecto-NOX disulfide-thiol exchanger 2 (598 aa).

Residues 99–178 (KTVFVGGLPE…GRLHVDFAQA (80 aa)) enclose the RRM domain. 2 coiled-coil regions span residues 264-299 (IQSA…LSGI) and 352-476 (RREE…KQEN).

It belongs to the ENOX family. The cofactor is Cu cation. Post-translationally, glycosylated.

The protein resides in the cell membrane. It localises to the secreted. The protein localises to the extracellular space. Inhibited by the antitumor sulfonylurea LY181984, the vabilloid capsaicin, and retinoids. Functionally, may be involved in cell growth. Probably acts as a terminal oxidase of plasma electron transport from cytosolic NAD(P)H via hydroquinones to acceptors at the cell surface. Hydroquinone oxidase activity alternates with a protein disulfide-thiol interchange/oxidoreductase activity which may control physical membrane displacements associated with vesicle budding or cell enlargement. The activities oscillate with a period length of 22 minutes and play a role in control of the ultradian cellular biological clock. This chain is Ecto-NOX disulfide-thiol exchanger 2 (Enox2), found in Mus musculus (Mouse).